The sequence spans 420 residues: Glucose-1-phosphate adenylyltransferase (420 aa).

Alpha-D-glucose 1-phosphate-binding positions include Y107, G172, 187–188 (EK), and S205.

Belongs to the bacterial/plant glucose-1-phosphate adenylyltransferase family. As to quaternary structure, homotetramer.

The catalysed reaction is alpha-D-glucose 1-phosphate + ATP + H(+) = ADP-alpha-D-glucose + diphosphate. Its pathway is glycan biosynthesis; glycogen biosynthesis. In terms of biological role, involved in the biosynthesis of ADP-glucose, a building block required for the elongation reactions to produce glycogen. Catalyzes the reaction between ATP and alpha-D-glucose 1-phosphate (G1P) to produce pyrophosphate and ADP-Glc. In Agrobacterium fabrum (strain C58 / ATCC 33970) (Agrobacterium tumefaciens (strain C58)), this protein is Glucose-1-phosphate adenylyltransferase.